We begin with the raw amino-acid sequence, 874 residues long: Alanine--tRNA ligase (874 aa).

Residues His562, His566, Cys664, and His668 each coordinate Zn(2+).

This sequence belongs to the class-II aminoacyl-tRNA synthetase family. The cofactor is Zn(2+).

It is found in the cytoplasm. It catalyses the reaction tRNA(Ala) + L-alanine + ATP = L-alanyl-tRNA(Ala) + AMP + diphosphate. Functionally, catalyzes the attachment of alanine to tRNA(Ala) in a two-step reaction: alanine is first activated by ATP to form Ala-AMP and then transferred to the acceptor end of tRNA(Ala). Also edits incorrectly charged Ser-tRNA(Ala) and Gly-tRNA(Ala) via its editing domain. This is Alanine--tRNA ligase from Shewanella woodyi (strain ATCC 51908 / MS32).